Consider the following 279-residue polypeptide: Movement protein (279 aa).

Over residues 256-266 the composition is skewed to low complexity; the sequence is PPIAIGSPSAS. Residues 256 to 279 form a disordered region; that stretch reads PPIAIGSPSASRNNSFRSQVVNGL. Residues 267–279 show a composition bias toward polar residues; that stretch reads RNNSFRSQVVNGL.

It belongs to the cucumovirus movement protein family.

The protein resides in the host cell junction. The protein localises to the host plasmodesma. Transports viral genome to neighboring plant cells directly through plasmosdesmata, without any budding. The movement protein allows efficient cell to cell propagation, by bypassing the host cell wall barrier. Acts by forming a tubular structure at the host plasmodesmata, enlarging it enough to allow free passage of virion capsids. The chain is Movement protein from Cucumis sativus (Cucumber).